Here is a 567-residue protein sequence, read N- to C-terminus: Dihydroxy-acid dehydratase 3 (567 aa).

Residue C57 participates in [2Fe-2S] cluster binding. D89 is a Mg(2+) binding site. C130 provides a ligand contact to [2Fe-2S] cluster. Mg(2+) contacts are provided by D131 and K132. K132 is modified (N6-carboxylysine). Position 202 (C202) interacts with [2Fe-2S] cluster. E454 provides a ligand contact to Mg(2+). The Proton acceptor role is filled by S480.

It belongs to the IlvD/Edd family. In terms of assembly, homodimer. Requires [2Fe-2S] cluster as cofactor. Mg(2+) serves as cofactor.

The enzyme catalyses (2R)-2,3-dihydroxy-3-methylbutanoate = 3-methyl-2-oxobutanoate + H2O. The catalysed reaction is (2R,3R)-2,3-dihydroxy-3-methylpentanoate = (S)-3-methyl-2-oxopentanoate + H2O. It participates in amino-acid biosynthesis; L-isoleucine biosynthesis; L-isoleucine from 2-oxobutanoate: step 3/4. Its pathway is amino-acid biosynthesis; L-valine biosynthesis; L-valine from pyruvate: step 3/4. Functions in the biosynthesis of branched-chain amino acids. Catalyzes the dehydration of (2R,3R)-2,3-dihydroxy-3-methylpentanoate (2,3-dihydroxy-3-methylvalerate) into 2-oxo-3-methylpentanoate (2-oxo-3-methylvalerate) and of (2R)-2,3-dihydroxy-3-methylbutanoate (2,3-dihydroxyisovalerate) into 2-oxo-3-methylbutanoate (2-oxoisovalerate), the penultimate precursor to L-isoleucine and L-valine, respectively. The protein is Dihydroxy-acid dehydratase 3 of Aromatoleum aromaticum (strain DSM 19018 / LMG 30748 / EbN1) (Azoarcus sp. (strain EbN1)).